The following is a 66-amino-acid chain: Photosystem II reaction center protein H (66 aa).

A helical transmembrane segment spans residues 27-47 (GAVPIMTVIGLLLLVFLVILL).

This sequence belongs to the PsbH family. PSII is composed of 1 copy each of membrane proteins PsbA, PsbB, PsbC, PsbD, PsbE, PsbF, PsbH, PsbI, PsbJ, PsbK, PsbL, PsbM, PsbT, PsbX, PsbY, Psb30/Ycf12, peripheral proteins PsbO, CyanoQ (PsbQ), PsbU, PsbV and a large number of cofactors. It forms dimeric complexes.

Its subcellular location is the cellular thylakoid membrane. Its function is as follows. One of the components of the core complex of photosystem II (PSII), required for its stability and/or assembly. PSII is a light-driven water:plastoquinone oxidoreductase that uses light energy to abstract electrons from H(2)O, generating O(2) and a proton gradient subsequently used for ATP formation. It consists of a core antenna complex that captures photons, and an electron transfer chain that converts photonic excitation into a charge separation. The protein is Photosystem II reaction center protein H of Prochlorococcus marinus (strain MIT 9515).